The following is a 307-amino-acid chain: Ribonuclease HII (307 aa).

The RNase H type-2 domain maps to 44–235 (EPVAGVDEAG…VRRAGGRMEL (192 aa)). A divalent metal cation is bound by residues Asp-50, Glu-51, and Asp-144. The interval 241–307 (ADSDDSPGFA…SRPAELLEIP (67 aa)) is disordered. A compositionally biased stretch (low complexity) spans 250 to 280 (ASGPAEAVPGPAGSAGAASAAARPAAAGPAG). Basic and acidic residues predominate over residues 287 to 296 (RAADLRDNGD).

The protein belongs to the RNase HII family. Mn(2+) is required as a cofactor. It depends on Mg(2+) as a cofactor.

Its subcellular location is the cytoplasm. The catalysed reaction is Endonucleolytic cleavage to 5'-phosphomonoester.. Functionally, endonuclease that specifically degrades the RNA of RNA-DNA hybrids. This chain is Ribonuclease HII, found in Acidothermus cellulolyticus (strain ATCC 43068 / DSM 8971 / 11B).